The following is a 459-amino-acid chain: tRNA modification GTPase MnmE (459 aa).

Arginine 23, glutamate 88, and arginine 127 together coordinate (6S)-5-formyl-5,6,7,8-tetrahydrofolate. Residues 223–381 (GLSVVIVGKP…IKNCIKELFF (159 aa)) form the TrmE-type G domain. Residue asparagine 233 coordinates K(+). GTP contacts are provided by residues 233 to 238 (NVGKSS), 252 to 258 (TDIPGTT), and 277 to 280 (DTAG). Residue serine 237 participates in Mg(2+) binding. 3 residues coordinate K(+): threonine 252, isoleucine 254, and threonine 257. Threonine 258 serves as a coordination point for Mg(2+). Lysine 459 serves as a coordination point for (6S)-5-formyl-5,6,7,8-tetrahydrofolate.

Belongs to the TRAFAC class TrmE-Era-EngA-EngB-Septin-like GTPase superfamily. TrmE GTPase family. As to quaternary structure, homodimer. Heterotetramer of two MnmE and two MnmG subunits. The cofactor is K(+).

It localises to the cytoplasm. Its function is as follows. Exhibits a very high intrinsic GTPase hydrolysis rate. Involved in the addition of a carboxymethylaminomethyl (cmnm) group at the wobble position (U34) of certain tRNAs, forming tRNA-cmnm(5)s(2)U34. The chain is tRNA modification GTPase MnmE from Clostridium kluyveri (strain ATCC 8527 / DSM 555 / NBRC 12016 / NCIMB 10680 / K1).